A 254-amino-acid chain; its full sequence is PF03932 family protein CutC (254 aa).

Belongs to the CutC family.

It is found in the cytoplasm. In Yersinia pseudotuberculosis serotype I (strain IP32953), this protein is PF03932 family protein CutC.